Consider the following 334-residue polypeptide: Trans-1,2-dihydrobenzene-1,2-diol dehydrogenase (334 aa).

This sequence belongs to the Gfo/Idh/MocA family. In terms of assembly, homodimer. In terms of tissue distribution, kidney.

The catalysed reaction is (1R,2R)-1,2-dihydrobenzene-1,2-diol + NADP(+) = catechol + NADPH + H(+). It catalyses the reaction D-xylose + NADP(+) = D-xylono-1,5-lactone + NADPH + H(+). The protein is Trans-1,2-dihydrobenzene-1,2-diol dehydrogenase (DHDH) of Macaca fascicularis (Crab-eating macaque).